The sequence spans 1252 residues: MSSDVSQYTIGGVKIMFPCKAYPSQLAMMNAIVKGLNNRQHCLLESPTGSGKSLALLCSALSWQQSLYEKSLLKSSCEKEDREPAASLPCRCVCHSRSESSEATAGASHGAACSNNYETGGSVKHGDQLSDTECKENNTLASKLSAKKRASACGNECDDFQVERKRIRPLETEQQVRKRHCFSKEVQLVDALEVYNQRKNGELIVHSEKSVKNTSPQTLFSSCTECSCSSGKETRKDSGNTKKKANGDQTFIPKIFFGTRTHKQIAQITRELKRTAYSGVPMTILSSRDYTCIHPVVSSSNSNRNELCVELLEGKHGKSCLYYHGVHKLSEHYALQSAHNTYQAWDIEDLVSLGKKLRACPYFAARELMVGADIVFCPYNYLLDPQIRESMEINLKGQVVILDEAHNIEDSAREAVSYSVTESQLNAAREELDFMVNNNIRQKDHEQLRAMCCSLTNWLRESSSQLVETGYETSCKVWSGKEMLNHFHDMGITNISFPILQKHLSAVLEKEEKISMFGKEELVEIPIVSSATQIVLKGLFMVLLYLFKDNSRFADDYRVALQQTYAWTNDNQPDVSDTSAFFTKTKHKRNLRHKTVVHMLNFWCLNPAVAFSDLNDVRTVVLTSGTLSPMDSFSSELGVKFSIQLEANHVIRNSQVWVGTIGTGPNGRKLCATFQHTETFEFQDEVGALLLSVCQKVGQGILCFLPSYKLLDKLKDRWIHTGLWRNLELVKTVIAEPQGGAKSDFDELLKIYYDAIKFKGEKDGALLIAVCRGKVSEGLDFCDENARAVITIGIPFPNVKDLQVELKRKYNDQHKTTRGLLPGSQWYEIQAYRALNQALGRCIRHRSDWGALILVDDRFRNNPNKYITGLSKWIRQQVQHHENFGSALESLHAFAERNQKGIDFSSQCSNEVFHVPLNSKEPSSASQQEATIHLSPDVPVKSEEQSFVPETHLTTTINSINPGPSNQPGGQKVDVESCSHNGIQRRKHMDSTPRRPANKTEKKSDRTNSDFMKEHCCFKPLTSTPLPVATNCVSTASSKQRKNVNSASELIGGVNQCQSSFTLEHKPSIPESHLETTNFSVKSTEAPVAEEHLDEQKLQIEPCSELPSVGGRPELSVLEISAEDEDESLYFTPELYDDAESEEQEMRPLDPDENQIECGKPTVADDLFVISTSKTLSEPKEMINDDGRNTSLHGTMLSDISKNSTVNIEKMTNGEEAEQVESQEVDTKKRKISLSRSRNKGVSPFLLDSTST.

Residues 11–452 (GGVKIMFPCK…KDHEQLRAMC (442 aa)) form the Helicase ATP-binding domain. Residues 164 to 181 (RKRIRPLETEQQVRKRHC) carry the Nuclear localization signal motif. 191 to 198 (ALEVYNQR) contributes to the ATP binding site. 4 residues coordinate [4Fe-4S] cluster: C292, C308, C320, and C360. Positions 403-406 (DEAH) match the DEAH box motif. Disordered stretches follow at residues 919–1008 (SKEP…DRTN) and 1212–1252 (TNGE…STST). Composition is skewed to polar residues over residues 920–930 (KEPSSASQQEA) and 952–969 (HLTT…NQPG). Over residues 989–1008 (MDSTPRRPANKTEKKSDRTN) the composition is skewed to basic and acidic residues. Acidic residues predominate over residues 1215 to 1224 (EEAEQVESQE). A compositionally biased stretch (basic residues) spans 1228–1239 (KKRKISLSRSRN).

The protein belongs to the DEAD box helicase family. DEAH subfamily. [4Fe-4S] cluster serves as cofactor.

It is found in the nucleus. It carries out the reaction Couples ATP hydrolysis with the unwinding of duplex DNA at the replication fork by translocating in the 5'-3' direction. This creates two antiparallel DNA single strands (ssDNA). The leading ssDNA polymer is the template for DNA polymerase III holoenzyme which synthesizes a continuous strand.. The enzyme catalyses ATP + H2O = ADP + phosphate + H(+). DNA-dependent helicase and 5' to 3' DNA helicase required for the maintenance of chromosomal stability. Involved in the repair of DNA double-strand breaks by homologous recombination. Involved in the repair of abasic sites at replication forks by promoting the degradation of DNA-protein cross-links: acts by catalyzing unfolding of HMCES DNA-protein cross-link via its helicase activity, exposing the underlying DNA and enabling cleavage of the DNA-protein adduct by the SPRTN metalloprotease. This chain is Fanconi anemia group J protein homolog (BRIP1), found in Gallus gallus (Chicken).